The chain runs to 115 residues: Fluoride-specific ion channel FluC 4 (115 aa).

2 helical membrane passes run tryptophan 19–glycine 39 and leucine 42–glycine 62. Glycine 61 and threonine 64 together coordinate Na(+). Residues isoleucine 89 to tryptophan 109 traverse the membrane as a helical segment.

The protein belongs to the fluoride channel Fluc/FEX (TC 1.A.43) family.

The protein resides in the cell inner membrane. The catalysed reaction is fluoride(in) = fluoride(out). With respect to regulation, na(+) is not transported, but it plays an essential structural role and its presence is essential for fluoride channel function. Functionally, fluoride-specific ion channel. Important for reducing fluoride concentration in the cell, thus reducing its toxicity. In Brucella melitensis biotype 1 (strain ATCC 23456 / CCUG 17765 / NCTC 10094 / 16M), this protein is Fluoride-specific ion channel FluC 4.